The chain runs to 247 residues: NAD-dependent protein deacetylase 2 (247 aa).

Positions 1 to 247 (MDQIRQLAQW…ASVRKQIQAE (247 aa)) constitute a Deacetylase sirtuin-type domain. NAD(+)-binding residues include alanine 23, threonine 27, phenylalanine 34, arginine 35, glutamine 103, isoleucine 105, aspartate 106, and histidine 121. Phenylalanine 34 provides a ligand contact to nicotinamide. Residues isoleucine 105 and aspartate 106 each coordinate nicotinamide. The Proton acceptor role is filled by histidine 121. Zn(2+)-binding residues include cysteine 129, cysteine 132, cysteine 149, and cysteine 152. The NAD(+) site is built by threonine 188, serine 189, asparagine 215, and isoleucine 233.

It belongs to the sirtuin family. Class U subfamily. The cofactor is Zn(2+).

Its subcellular location is the cytoplasm. The catalysed reaction is N(6)-acetyl-L-lysyl-[protein] + NAD(+) + H2O = 2''-O-acetyl-ADP-D-ribose + nicotinamide + L-lysyl-[protein]. Its function is as follows. NAD-dependent protein deacetylase which modulates the activities of several enzymes which are inactive in their acetylated form. The protein is NAD-dependent protein deacetylase 2 of Geobacillus kaustophilus (strain HTA426).